Here is a 198-residue protein sequence, read N- to C-terminus: Protoplast secreted protein 2 (198 aa).

A signal peptide spans 1–21; the sequence is MPRVAIIIYTLYGHVAATAEA. A Flavodoxin-like domain is found at 22–191; sequence EKKGIEAAGG…QVHEIQGKTF (170 aa).

Belongs to the WrbA family.

The protein resides in the secreted. In Saccharomyces cerevisiae (strain ATCC 204508 / S288c) (Baker's yeast), this protein is Protoplast secreted protein 2 (PST2).